The primary structure comprises 332 residues: Ketol-acid reductoisomerase (NADP(+)) (332 aa).

In terms of domain architecture, KARI N-terminal Rossmann spans 1–182 (MAQVWKDAEI…GSARAGLIKT (182 aa)). Residues 25 to 28 (YGIQ), K48, S53, and 83 to 86 (DMIQ) contribute to the NADP(+) site. Residue H108 is part of the active site. An NADP(+)-binding site is contributed by G134. Residues 183 to 329 (TFKEEVETDW…RKMRKMMWPD (147 aa)) form the KARI C-terminal knotted domain. Residues D191, E195, E227, and E231 each coordinate Mg(2+). Residue S252 coordinates substrate.

It belongs to the ketol-acid reductoisomerase family. Mg(2+) serves as cofactor.

The catalysed reaction is (2R)-2,3-dihydroxy-3-methylbutanoate + NADP(+) = (2S)-2-acetolactate + NADPH + H(+). The enzyme catalyses (2R,3R)-2,3-dihydroxy-3-methylpentanoate + NADP(+) = (S)-2-ethyl-2-hydroxy-3-oxobutanoate + NADPH + H(+). Its pathway is amino-acid biosynthesis; L-isoleucine biosynthesis; L-isoleucine from 2-oxobutanoate: step 2/4. It functions in the pathway amino-acid biosynthesis; L-valine biosynthesis; L-valine from pyruvate: step 2/4. Involved in the biosynthesis of branched-chain amino acids (BCAA). Catalyzes an alkyl-migration followed by a ketol-acid reduction of (S)-2-acetolactate (S2AL) to yield (R)-2,3-dihydroxy-isovalerate. In the isomerase reaction, S2AL is rearranged via a Mg-dependent methyl migration to produce 3-hydroxy-3-methyl-2-ketobutyrate (HMKB). In the reductase reaction, this 2-ketoacid undergoes a metal-dependent reduction by NADPH to yield (R)-2,3-dihydroxy-isovalerate. The polypeptide is Ketol-acid reductoisomerase (NADP(+)) (Cenarchaeum symbiosum (strain A)).